A 675-amino-acid chain; its full sequence is Zinc finger protein 526 (675 aa).

3 consecutive C2H2-type zinc fingers follow at residues 56 to 78, 108 to 130, and 140 to 163; these read FMCSECGSLYNTLEEVLSHQEQH, FQCGECSQLILSPSELLAHQDAH, and YQCGDCQELFPSPELWVAHRKTQH. The interval 160–195 is disordered; that stretch reads KTQHLSSAADEPPSPLPPPTPPPPPPPPPPPPPPEV. The segment covering 171–194 has biased composition (pro residues); that stretch reads PPSPLPPPTPPPPPPPPPPPPPPE. The C2H2-type 4 zinc finger occupies 200–222; it reads YECPECSTLCATPEEFLEHQGTH. Residues 225–234 show a composition bias toward basic and acidic residues; sequence SLEKEEHNGL. The segment at 225–283 is disordered; the sequence is SLEKEEHNGLEEEEEDEEEGEEEEDDDDEETDEEEASSELTADDTGSNKSTADSAQSCG. Acidic residues predominate over residues 235 to 261; that stretch reads EEEEEDEEEGEEEEDDDDEETDEEEAS. Over residues 269–281 the composition is skewed to polar residues; it reads TGSNKSTADSAQS. C2H2-type zinc fingers lie at residues 312 to 334, 339 to 361, 367 to 389, and 395 to 416; these read FHCSQCQRSFSSANRLVAHGRAH, HECTTCSKVFKKAASLEQHQRLH, YLCVDCGRGFGTELTLVAHRRAH, and HRCRCGKTFSNMTKFLYHRRTH. Positions 415–439 are disordered; that stretch reads THTGKSGTPTRVATVSPAPAEPTPP. A compositionally biased stretch (polar residues) spans 418 to 427; it reads GKSGTPTRVA. C2H2-type zinc fingers lie at residues 447–470, 477–499, 505–527, 533–555, and 578–600; these read LPCPQCPKSFASASRLSRHRRAVH, HRCGVCGKGFKKLVHVRNHLRTH, FQCHSCGKTFASLANLSRHQLTH, YQCLDCGKRFTQSSNLQQHRRLH, and YYCGTCGRWFRAMAGLRLHQRVH. Residues 606-625 form a disordered region; the sequence is LTLQPPRSPSPVPPPPPEPQ. Residues 611 to 624 are compositionally biased toward pro residues; it reads PRSPSPVPPPPPEP.

It belongs to the krueppel C2H2-type zinc-finger protein family.

It is found in the nucleus. May be involved in transcriptional regulation. The protein is Zinc finger protein 526 (Znf526) of Mus musculus (Mouse).